The primary structure comprises 150 residues: Avidin-related protein 6 (150 aa).

The first 24 residues, 1–24, serve as a signal peptide directing secretion; the sequence is MVHATSPLLLLLLLSLALVAPGLS. Residues 26-147 form the Avidin-like domain; it reads RKCSLTGEWD…GYNNFTRQRT (122 aa). A disulfide bridge connects residues Cys28 and Cys105. Biotin contacts are provided by Asn36 and Ser40. An N-linked (GlcNAc...) asparagine glycan is attached at Asn54. Biotin-binding residues include Tyr57, Thr59, and Asp63. A glycan (N-linked (GlcNAc...) asparagine) is linked at Asn93. Biotin-binding residues include Ser95, Ser99, and Asn140. N-linked (GlcNAc...) asparagine glycosylation occurs at Asn141.

It belongs to the avidin/streptavidin family. As to quaternary structure, homotetramer. Glycosylated.

It is found in the secreted. Its function is as follows. Forms a strong non-covalent specific complex with biotin. This Gallus gallus (Chicken) protein is Avidin-related protein 6 (AVR6).